A 105-amino-acid polypeptide reads, in one-letter code: Large ribosomal subunit protein uL24 (105 aa).

This sequence belongs to the universal ribosomal protein uL24 family. As to quaternary structure, part of the 50S ribosomal subunit.

One of two assembly initiator proteins, it binds directly to the 5'-end of the 23S rRNA, where it nucleates assembly of the 50S subunit. Functionally, one of the proteins that surrounds the polypeptide exit tunnel on the outside of the subunit. This chain is Large ribosomal subunit protein uL24, found in Acinetobacter baumannii (strain AB307-0294).